Here is a 267-residue protein sequence, read N- to C-terminus: Hydroxynaphthalene reductase-like protein Arp2 (267 aa).

Residues Ile-25, Asn-45, Asp-71, and Asn-98 each coordinate NADP(+). Active-site proton donor residues include Ser-147 and Ser-148. The NADP(+) site is built by Tyr-162, Lys-166, Val-195, and Thr-197. Tyr-162 functions as the Proton acceptor in the catalytic mechanism. Lys-166 (lowers pKa of active site Tyr) is an active-site residue.

This sequence belongs to the short-chain dehydrogenases/reductases (SDR) family.

Its function is as follows. Hydroxynaphthalene reductase-like protein; part of the Pks2 gene cluster that mediates the formation of infectious structures (appressoria), enabling these fungi to kill insects faster. The product of the Pks2 gene cluster is different from the one of Pks1 and has still not been identified. The protein is Hydroxynaphthalene reductase-like protein Arp2 of Metarhizium robertsii (strain ARSEF 23 / ATCC MYA-3075) (Metarhizium anisopliae (strain ARSEF 23)).